Consider the following 211-residue polypeptide: FMN-dependent NADH:quinone oxidoreductase 3 (211 aa).

17–19 (SFS) is an FMN binding site.

It belongs to the azoreductase type 1 family. In terms of assembly, homodimer. It depends on FMN as a cofactor.

It catalyses the reaction 2 a quinone + NADH + H(+) = 2 a 1,4-benzosemiquinone + NAD(+). The catalysed reaction is N,N-dimethyl-1,4-phenylenediamine + anthranilate + 2 NAD(+) = 2-(4-dimethylaminophenyl)diazenylbenzoate + 2 NADH + 2 H(+). Functionally, quinone reductase that provides resistance to thiol-specific stress caused by electrophilic quinones. Its function is as follows. Also exhibits azoreductase activity. Catalyzes the reductive cleavage of the azo bond in aromatic azo compounds to the corresponding amines. The protein is FMN-dependent NADH:quinone oxidoreductase 3 of Halalkalibacterium halodurans (strain ATCC BAA-125 / DSM 18197 / FERM 7344 / JCM 9153 / C-125) (Bacillus halodurans).